The following is a 352-amino-acid chain: Ribosomal lysine N-methyltransferase 5 (352 aa).

Residues W107, 161-163, D183, W244, and L274 contribute to the S-adenosyl-L-methionine site; that span reads GSG.

The protein belongs to the class I-like SAM-binding methyltransferase superfamily. RKM5 family.

Its function is as follows. S-adenosyl-L-methionine-dependent protein-lysine N-methyltransferase that methylates 60S ribosomal protein L1. The polypeptide is Ribosomal lysine N-methyltransferase 5 (RKM5) (Candida glabrata (strain ATCC 2001 / BCRC 20586 / JCM 3761 / NBRC 0622 / NRRL Y-65 / CBS 138) (Yeast)).